Reading from the N-terminus, the 604-residue chain is Rhotekin-2 (604 aa).

The region spanning 1 to 74 (MEGQLLRGLA…LQKSKEEIAN (74 aa)) is the REM-1 domain. The stretch at 53 to 79 (VCSARIQAYTAELQKSKEEIANQTGAR) forms a coiled coil. Residues 281 to 387 (ADAFAGFLNE…WMGAFRQHFF (107 aa)) form the PH domain. The tract at residues 481–590 (LSPIGEPAPD…PVPVPRQKSI (110 aa)) is disordered. Polar residues predominate over residues 514–527 (GRANQSKDSATQAG). Positions 529–543 (SGASSSPSDPRLSPP) are enriched in low complexity.

In terms of biological role, may play an important role in lymphopoiesis. In Mus musculus (Mouse), this protein is Rhotekin-2 (Rtkn2).